The sequence spans 227 residues: Flagellar L-ring protein 2 (227 aa).

The N-terminal stretch at 1-17 (MKSKLAITMVSALLLAA) is a signal peptide. A lipid anchor (N-palmitoyl cysteine) is attached at Cys-18. The S-diacylglycerol cysteine moiety is linked to residue Cys-18.

The protein belongs to the FlgH family. The basal body constitutes a major portion of the flagellar organelle and consists of four rings (L,P,S, and M) mounted on a central rod.

The protein resides in the cell outer membrane. It localises to the bacterial flagellum basal body. Functionally, assembles around the rod to form the L-ring and probably protects the motor/basal body from shearing forces during rotation. This is Flagellar L-ring protein 2 from Chromobacterium violaceum (strain ATCC 12472 / DSM 30191 / JCM 1249 / CCUG 213 / NBRC 12614 / NCIMB 9131 / NCTC 9757 / MK).